Reading from the N-terminus, the 346-residue chain is NADH-quinone oxidoreductase subunit H (346 aa).

8 consecutive transmembrane segments (helical) span residues 6 to 26, 76 to 96, 128 to 148, 166 to 186, 198 to 218, 260 to 280, 289 to 309, and 324 to 344; these read ILFW…ACAY, IMYL…WSVV, ILFL…AGWA, ISYE…TGSL, LWNI…VAMF, ITMS…PFGI, LFGL…FVWV, and LGWK…SLYI.

The protein belongs to the complex I subunit 1 family. In terms of assembly, NDH-1 is composed of 14 different subunits. Subunits NuoA, H, J, K, L, M, N constitute the membrane sector of the complex.

It localises to the cell inner membrane. It carries out the reaction a quinone + NADH + 5 H(+)(in) = a quinol + NAD(+) + 4 H(+)(out). Functionally, NDH-1 shuttles electrons from NADH, via FMN and iron-sulfur (Fe-S) centers, to quinones in the respiratory chain. The immediate electron acceptor for the enzyme in this species is believed to be ubiquinone. Couples the redox reaction to proton translocation (for every two electrons transferred, four hydrogen ions are translocated across the cytoplasmic membrane), and thus conserves the redox energy in a proton gradient. This subunit may bind ubiquinone. The chain is NADH-quinone oxidoreductase subunit H from Leptospira borgpetersenii serovar Hardjo-bovis (strain JB197).